The primary structure comprises 473 residues: MNENKASNRMWGGRFASGPDAIMEAINASIGFDRKLYAQDIRGSLAHAAMLAETGIISTEDEKKIAHGLNTILSEIEAGKFEFSTRLEDIHMNVEARLAELIGPAAGRLHTARSRNDQVAVDFRLWVKEELLRIDVALGGLIEAFLVRAEEHAATVMPGFTHLQTAQPVTFGHHLMAYVEMFGRDRTRVRDAVERLDESPLGAAALAGTSFPIDRHMTAKTLGFREPTRNSIDTVSDRDFALEFLSVSAICATHLSRLAEEIVIWSTSQFGFIRLSDAFSTGSSIMPQKKNPDAAELVRAKTGRINGHLIGLLTVMKGLPLAYSKDMQEDKEAVFDAAETLDLMLAAMTGMIGDMEVNAAAMKKAAGSGFSTATDLADWLVREAGLPFREAHHVTGRAVALAEERKCGLEKLALSDLQAIHPAITENIFSVLSVGNSVKSRTSFGGTAPAEVRRQVRYWKKRLKRDASLEKKG.

Belongs to the lyase 1 family. Argininosuccinate lyase subfamily.

It is found in the cytoplasm. It carries out the reaction 2-(N(omega)-L-arginino)succinate = fumarate + L-arginine. Its pathway is amino-acid biosynthesis; L-arginine biosynthesis; L-arginine from L-ornithine and carbamoyl phosphate: step 3/3. The polypeptide is Argininosuccinate lyase (Chelativorans sp. (strain BNC1)).